A 188-amino-acid chain; its full sequence is Threonylcarbamoyl-AMP synthase (188 aa).

The YrdC-like domain maps to 3 to 188 (QLHPSEIKDL…RSGKILRNGQ (186 aa)).

The protein belongs to the SUA5 family. TsaC subfamily.

The protein localises to the cytoplasm. The catalysed reaction is L-threonine + hydrogencarbonate + ATP = L-threonylcarbamoyladenylate + diphosphate + H2O. Required for the formation of a threonylcarbamoyl group on adenosine at position 37 (t(6)A37) in tRNAs that read codons beginning with adenine. Catalyzes the conversion of L-threonine, HCO(3)(-)/CO(2) and ATP to give threonylcarbamoyl-AMP (TC-AMP) as the acyladenylate intermediate, with the release of diphosphate. This is Threonylcarbamoyl-AMP synthase from Shewanella sp. (strain ANA-3).